The primary structure comprises 443 residues: Protein IQ-DOMAIN 11 (443 aa).

The tract at residues 5-20 is calmodulin-binding; it reads KGLFTVLKRIFISEVN. 2 short sequence motifs (nuclear localization signal) span residues 11-18 and 27-34; these read LKRIFISE and RRKWTFWK. The segment at 44–65 is disordered; sequence ITAPPEHRTSHESHEEQKEEIV. The segment covering 48–64 has biased composition (basic and acidic residues); it reads PEHRTSHESHEEQKEEI. IQ domains lie at 113 to 138 and 139 to 161; these read AATRIQTAFRGHLARKALRALKGIVK and LQAYIRGRAVRRQAMTTLKCLQS. Basic and acidic residues predominate over residues 277 to 293; that stretch reads FSSKTKPKDETLNEKQL. The segment at 277–361 is disordered; sequence FSSKTKPKDE…PRSFDTQSES (85 aa).

It belongs to the IQD family. In terms of assembly, binds to multiple calmodulin (CaM) in the presence of Ca(2+) and CaM-like proteins. As to expression, expressed in hypocotyls, cotyledons, leaves and petioles.

The protein localises to the nucleus. It localises to the cytoplasm. Its subcellular location is the cytoskeleton. In terms of biological role, may be involved in cooperative interactions with calmodulins or calmodulin-like proteins. Recruits calmodulin proteins to microtubules, thus being a potential scaffold in cellular signaling and trafficking. Regulates cell shape and elongation in aerial organs (i.e. epidermis pavement cells) probably by regulating cortical microtubules (MT) arrays orientation. May associate with nucleic acids and regulate gene expression at the transcriptional or post-transcriptional level. The polypeptide is Protein IQ-DOMAIN 11 (Arabidopsis thaliana (Mouse-ear cress)).